A 156-amino-acid chain; its full sequence is SsrA-binding protein (156 aa).

Positions 135–150 (KRDTIKDREWQRDRSR) are enriched in basic and acidic residues. The segment at 135–156 (KRDTIKDREWQRDRSRIMKKNT) is disordered.

This sequence belongs to the SmpB family.

Its subcellular location is the cytoplasm. Functionally, required for rescue of stalled ribosomes mediated by trans-translation. Binds to transfer-messenger RNA (tmRNA), required for stable association of tmRNA with ribosomes. tmRNA and SmpB together mimic tRNA shape, replacing the anticodon stem-loop with SmpB. tmRNA is encoded by the ssrA gene; the 2 termini fold to resemble tRNA(Ala) and it encodes a 'tag peptide', a short internal open reading frame. During trans-translation Ala-aminoacylated tmRNA acts like a tRNA, entering the A-site of stalled ribosomes, displacing the stalled mRNA. The ribosome then switches to translate the ORF on the tmRNA; the nascent peptide is terminated with the 'tag peptide' encoded by the tmRNA and targeted for degradation. The ribosome is freed to recommence translation, which seems to be the essential function of trans-translation. This chain is SsrA-binding protein, found in Legionella pneumophila (strain Corby).